Reading from the N-terminus, the 215-residue chain is MDFKSRKYKIKKHPKDCKLHAKKYRGTLNSKGKNDNDCLIMCMRCRKVKGIDSYSKTQWSKTFTFVRGRTVSVSDPKVICRTCQPKQHDSIWCTACQQTKGINEFSKAQRHVLDPRCQICVHSQRNDGDDNLESDKFVDPFIGDDSDLDDDIYIHDKQTINSEYADDVSDNTDEERTESKGQQESNSAEEYDDDDSDEDRMEEIFQQFKKEKQIV.

The disordered stretch occupies residues 159–202 (TINSEYADDVSDNTDEERTESKGQQESNSAEEYDDDDSDEDRME). 2 stretches are compositionally biased toward acidic residues: residues 164–176 (YADD…DEER) and 187–201 (SAEE…EDRM).

It localises to the nucleus. Its subcellular location is the nucleolus. Required for meiotic chromosome segregation. The protein is Meiotic chromosome segregation protein P8B7.28c of Schizosaccharomyces pombe (strain 972 / ATCC 24843) (Fission yeast).